A 525-amino-acid chain; its full sequence is Asparagine synthetase [glutamine-hydrolyzing] (525 aa).

Cys-2 serves as the catalytic For GATase activity. Residues 2–185 enclose the Glutamine amidotransferase type-2 domain; it reads CGILAVLGCS…PGHLYSSKEG (184 aa). Residues 50–54, 75–77, and Asp-98 contribute to the L-glutamine site; these read RLAII and NGE. Residues 193–517 form the Asparagine synthetase domain; that stretch reads PPWFSEVIPS…QIDSPWRSKC (325 aa). ATP contacts are provided by residues Leu-231, Val-267, and 341 to 342; that span reads SG.

The catalysed reaction is L-aspartate + L-glutamine + ATP + H2O = L-asparagine + L-glutamate + AMP + diphosphate + H(+). It functions in the pathway amino-acid biosynthesis; L-asparagine biosynthesis; L-asparagine from L-aspartate (L-Gln route): step 1/1. Could play a role in remobilization of nitrogen in flowers during senescence. The protein is Asparagine synthetase [glutamine-hydrolyzing] (AND1) of Sandersonia aurantiaca (Christmas-bells).